A 301-amino-acid chain; its full sequence is Ras-related GTP-binding protein A (301 aa).

GTP is bound by residues 9-16 (GRSESGKT), 57-61 (DCGGQ), and 122-125 (HKMD).

This sequence belongs to the GTR/RAG GTP-binding protein family.

It is found in the cytoplasm. The protein resides in the nucleus. The protein localises to the lysosome. Its function is as follows. Guanine nucleotide-binding protein that plays a crucial role in the cellular response to amino acid availability through regulation of the TOR signaling cascade. The sequence is that of Ras-related GTP-binding protein A (ragA) from Dictyostelium discoideum (Social amoeba).